Reading from the N-terminus, the 437-residue chain is GTPase Der (437 aa).

2 EngA-type G domains span residues 4–168 (PVVA…PAED) and 177–352 (IRVS…QAHS). Residues 10-17 (GRPNVGKS), 57-61 (DTGGI), 120-123 (NKAD), 183-190 (GRPNVGKS), 230-234 (DTAGM), and 295-298 (NKWD) each bind GTP. A KH-like domain is found at 353–437 (MRIPTAVLND…PVRIWTRKKT (85 aa)).

The protein belongs to the TRAFAC class TrmE-Era-EngA-EngB-Septin-like GTPase superfamily. EngA (Der) GTPase family. In terms of assembly, associates with the 50S ribosomal subunit.

Its function is as follows. GTPase that plays an essential role in the late steps of ribosome biogenesis. The sequence is that of GTPase Der from Brevibacillus brevis (strain 47 / JCM 6285 / NBRC 100599).